A 78-amino-acid polypeptide reads, in one-letter code: MRTDSSKMTDVESGVANFASSARAGRRNALPDIQSSAATDGTSDLPLKLEALSVKEDAKEKDEKTTQDQLEKPQNEEK.

Residues 1-10 (MRTDSSKMTD) are compositionally biased toward basic and acidic residues. The tract at residues 1–78 (MRTDSSKMTD…QLEKPQNEEK (78 aa)) is disordered. The span at 33-42 (IQSSAATDGT) shows a compositional bias: polar residues. Over residues 53-78 (SVKEDAKEKDEKTTQDQLEKPQNEEK) the composition is skewed to basic and acidic residues.

Belongs to the PKI family.

In terms of biological role, extremely potent competitive inhibitor of cAMP-dependent protein kinase activity, this protein interacts with the catalytic subunit of the enzyme after the cAMP-induced dissociation of its regulatory chains. The sequence is that of cAMP-dependent protein kinase inhibitor beta (PKIB) from Homo sapiens (Human).